The sequence spans 259 residues: GTP cyclohydrolase FolE2 (259 aa).

This sequence belongs to the GTP cyclohydrolase IV family.

It carries out the reaction GTP + H2O = 7,8-dihydroneopterin 3'-triphosphate + formate + H(+). It functions in the pathway cofactor biosynthesis; 7,8-dihydroneopterin triphosphate biosynthesis; 7,8-dihydroneopterin triphosphate from GTP: step 1/1. Functionally, converts GTP to 7,8-dihydroneopterin triphosphate. This Thermotoga neapolitana (strain ATCC 49049 / DSM 4359 / NBRC 107923 / NS-E) protein is GTP cyclohydrolase FolE2.